Reading from the N-terminus, the 132-residue chain is Small ribosomal subunit protein uS8 (132 aa).

It belongs to the universal ribosomal protein uS8 family. As to quaternary structure, part of the 30S ribosomal subunit. Contacts proteins S5 and S12.

One of the primary rRNA binding proteins, it binds directly to 16S rRNA central domain where it helps coordinate assembly of the platform of the 30S subunit. This Exiguobacterium sibiricum (strain DSM 17290 / CCUG 55495 / CIP 109462 / JCM 13490 / 255-15) protein is Small ribosomal subunit protein uS8.